Consider the following 265-residue polypeptide: NAD kinase 1 (265 aa).

The active-site Proton acceptor is D45. NAD(+)-binding positions include 45 to 46 (DG), 122 to 123 (NE), R148, D150, and A185.

Belongs to the NAD kinase family. Requires a divalent metal cation as cofactor.

It localises to the cytoplasm. It catalyses the reaction NAD(+) + ATP = ADP + NADP(+) + H(+). Functionally, involved in the regulation of the intracellular balance of NAD and NADP, and is a key enzyme in the biosynthesis of NADP. Catalyzes specifically the phosphorylation on 2'-hydroxyl of the adenosine moiety of NAD to yield NADP. In Bacillus anthracis, this protein is NAD kinase 1.